Reading from the N-terminus, the 268-residue chain is uncharacterized protein (268 aa).

A coiled-coil region spans residues 132-159 (DELDEKIIEFDTKMNEILEELLEDVEVE).

This is an uncharacterized protein from Methanocaldococcus jannaschii (strain ATCC 43067 / DSM 2661 / JAL-1 / JCM 10045 / NBRC 100440) (Methanococcus jannaschii).